Here is a 205-residue protein sequence, read N- to C-terminus: Large ribosomal subunit protein uL13 (205 aa).

It belongs to the universal ribosomal protein uL13 family.

This chain is Large ribosomal subunit protein uL13 (RpL13A), found in Drosophila melanogaster (Fruit fly).